The following is a 702-amino-acid chain: Phosphoglycerol transferase I (702 aa).

Transmembrane regions (helical) follow at residues 5–24, 73–95, and 102–124; these read LLVS…RLAW, GYIA…VRIR, and GGGA…SPLY.

It belongs to the OpgB family.

Its subcellular location is the cell inner membrane. The enzyme catalyses a phosphatidylglycerol + a membrane-derived-oligosaccharide D-glucose = a 1,2-diacyl-sn-glycerol + a membrane-derived-oligosaccharide 6-(glycerophospho)-D-glucose.. The protein operates within glycan metabolism; osmoregulated periplasmic glucan (OPG) biosynthesis. Its function is as follows. Transfers a phosphoglycerol residue from phosphatidylglycerol to the membrane-bound nascent glucan backbones. The chain is Phosphoglycerol transferase I from Xanthomonas axonopodis pv. citri (strain 306).